Reading from the N-terminus, the 111-residue chain is Cell cycle protein GpsB (111 aa).

The stretch at 34-72 (LDMIIKDYEVFHKELEQLQQQNARLKRELEEQKLAAAQA) forms a coiled coil.

Belongs to the GpsB family. Forms polymers through the coiled coil domains. Interacts with PBP1, MreC and EzrA.

The protein resides in the cytoplasm. In terms of biological role, divisome component that associates with the complex late in its assembly, after the Z-ring is formed, and is dependent on DivIC and PBP2B for its recruitment to the divisome. Together with EzrA, is a key component of the system that regulates PBP1 localization during cell cycle progression. Its main role could be the removal of PBP1 from the cell pole after pole maturation is completed. Also contributes to the recruitment of PBP1 to the division complex. Not essential for septum formation. This Bacillus cytotoxicus (strain DSM 22905 / CIP 110041 / 391-98 / NVH 391-98) protein is Cell cycle protein GpsB.